The chain runs to 185 residues: Putative tyrosine-protein phosphatase OCA1 (185 aa).

The Tyrosine-protein phosphatase domain occupies 18-178 (NFCPVEKQLY…TVEIGSGKGS (161 aa)). Cysteine 116 acts as the Phosphocysteine intermediate in catalysis.

It belongs to the protein-tyrosine phosphatase family.

The protein localises to the cytoplasm. The enzyme catalyses O-phospho-L-tyrosyl-[protein] + H2O = L-tyrosyl-[protein] + phosphate. Its function is as follows. Putative tyrosine-protein phosphatase required for protection against superoxide stress. The polypeptide is Putative tyrosine-protein phosphatase OCA1 (OCA1) (Meyerozyma guilliermondii (strain ATCC 6260 / CBS 566 / DSM 6381 / JCM 1539 / NBRC 10279 / NRRL Y-324) (Yeast)).